The primary structure comprises 255 residues: Ribosomal RNA small subunit methyltransferase G (255 aa).

The disordered stretch occupies residues Met1–Arg44. Residues Gly118, Leu123, Val169–Glu170, and Arg183 each bind S-adenosyl-L-methionine.

Belongs to the methyltransferase superfamily. RNA methyltransferase RsmG family.

The protein localises to the cytoplasm. The enzyme catalyses guanosine(527) in 16S rRNA + S-adenosyl-L-methionine = N(7)-methylguanosine(527) in 16S rRNA + S-adenosyl-L-homocysteine. Specifically methylates the N7 position of guanine in position 527 of 16S rRNA. In Bordetella petrii (strain ATCC BAA-461 / DSM 12804 / CCUG 43448), this protein is Ribosomal RNA small subunit methyltransferase G.